The chain runs to 156 residues: Ribosomal RNA large subunit methyltransferase H (156 aa).

S-adenosyl-L-methionine-binding positions include L73, G104, and 123-128; that span reads LSPLTL.

The protein belongs to the RNA methyltransferase RlmH family. In terms of assembly, homodimer.

It is found in the cytoplasm. The catalysed reaction is pseudouridine(1915) in 23S rRNA + S-adenosyl-L-methionine = N(3)-methylpseudouridine(1915) in 23S rRNA + S-adenosyl-L-homocysteine + H(+). Specifically methylates the pseudouridine at position 1915 (m3Psi1915) in 23S rRNA. This is Ribosomal RNA large subunit methyltransferase H from Aliivibrio fischeri (strain MJ11) (Vibrio fischeri).